The following is a 190-amino-acid chain: Small ribosomal subunit protein uS5 (190 aa).

Positions 19-82 (IIDKLVTINR…ERAKRSMIRV (64 aa)) constitute an S5 DRBM domain. The tract at residues 161–190 (SVASRRGKKVSDILGRREPVAGQEGEEAHA) is disordered. Over residues 169–179 (KVSDILGRREP) the composition is skewed to basic and acidic residues.

It belongs to the universal ribosomal protein uS5 family. In terms of assembly, part of the 30S ribosomal subunit. Contacts proteins S4 and S8.

Its function is as follows. With S4 and S12 plays an important role in translational accuracy. Functionally, located at the back of the 30S subunit body where it stabilizes the conformation of the head with respect to the body. This Granulibacter bethesdensis (strain ATCC BAA-1260 / CGDNIH1) protein is Small ribosomal subunit protein uS5.